A 241-amino-acid chain; its full sequence is Probable septum site-determining protein MinC (241 aa).

Residues 109-135 are disordered; the sequence is PSGARERKVDPSSKTPAKPAEPTYRPT.

Belongs to the MinC family. As to quaternary structure, interacts with MinD and FtsZ.

Cell division inhibitor that blocks the formation of polar Z ring septums. Rapidly oscillates between the poles of the cell to destabilize FtsZ filaments that have formed before they mature into polar Z rings. Prevents FtsZ polymerization. The polypeptide is Probable septum site-determining protein MinC (Stutzerimonas stutzeri (strain A1501) (Pseudomonas stutzeri)).